Reading from the N-terminus, the 133-residue chain is Large ribosomal subunit protein bL17 (133 aa).

The protein belongs to the bacterial ribosomal protein bL17 family. Part of the 50S ribosomal subunit. Contacts protein L32.

The chain is Large ribosomal subunit protein bL17 from Thermodesulfovibrio yellowstonii (strain ATCC 51303 / DSM 11347 / YP87).